The following is a 557-amino-acid chain: Formate--tetrahydrofolate ligase (557 aa).

Residue 65-72 (TPAGEGKT) participates in ATP binding.

This sequence belongs to the formate--tetrahydrofolate ligase family.

It catalyses the reaction (6S)-5,6,7,8-tetrahydrofolate + formate + ATP = (6R)-10-formyltetrahydrofolate + ADP + phosphate. The protein operates within one-carbon metabolism; tetrahydrofolate interconversion. In Zymomonas mobilis subsp. mobilis (strain ATCC 31821 / ZM4 / CP4), this protein is Formate--tetrahydrofolate ligase.